Reading from the N-terminus, the 241-residue chain is Lipopolysaccharide export system ATP-binding protein LptB (241 aa).

The 233-residue stretch at 5–237 (LQAQSLFKSY…PMVRQVYLGD (233 aa)) folds into the ABC transporter domain. 37-44 (GPNGAGKT) is a binding site for ATP.

This sequence belongs to the ABC transporter superfamily. Outer membrane lipopolysaccharide export (TC 1.B.42) family. In terms of assembly, component of the lipopolysaccharide transport and assembly complex. The LptBFG transporter is composed of two ATP-binding proteins (LptB) and two transmembrane proteins (LptF and LptG).

The protein localises to the cytoplasm. The protein resides in the cell inner membrane. Functionally, part of the ABC transporter complex LptBFG involved in the translocation of lipopolysaccharide (LPS) from the inner membrane to the outer membrane. Probably responsible for energy coupling to the transport system. The protein is Lipopolysaccharide export system ATP-binding protein LptB (lptB) of Acidithiobacillus ferridurans.